The sequence spans 179 residues: Large ribosomal subunit protein uL10 (179 aa).

Belongs to the universal ribosomal protein uL10 family. As to quaternary structure, part of the ribosomal stalk of the 50S ribosomal subunit. The N-terminus interacts with L11 and the large rRNA to form the base of the stalk. The C-terminus forms an elongated spine to which L12 dimers bind in a sequential fashion forming a multimeric L10(L12)X complex.

Functionally, forms part of the ribosomal stalk, playing a central role in the interaction of the ribosome with GTP-bound translation factors. In Thermotoga neapolitana (strain ATCC 49049 / DSM 4359 / NBRC 107923 / NS-E), this protein is Large ribosomal subunit protein uL10.